We begin with the raw amino-acid sequence, 402 residues long: Ketol-acid reductoisomerase, mitochondrial (402 aa).

The transit peptide at 1-26 directs the protein to the mitochondrion; sequence MAARNCTKALRPLARQLATPAVQRRT. The KARI N-terminal Rossmann domain occupies 63–252; that stretch reads KEEVHERADW…AVGSGYLYET (190 aa). NADP(+)-binding positions include 90 to 99, 114 to 119, and 152 to 156; these read GYGSQGHGQG, RKNGKS, and SDAAQ. His177 is an active-site residue. The region spanning 253-400 is the KARI C-terminal knotted domain; the sequence is TFEKEVYSDL…KAVRSLRPEN (148 aa). Mg(2+) contacts are provided by Asp261, Glu265, Glu297, and Glu301. Ser323 is a binding site for substrate.

The protein belongs to the ketol-acid reductoisomerase family. The cofactor is Mg(2+).

The protein resides in the mitochondrion. The enzyme catalyses (2R)-2,3-dihydroxy-3-methylbutanoate + NADP(+) = (2S)-2-acetolactate + NADPH + H(+). It catalyses the reaction (2R,3R)-2,3-dihydroxy-3-methylpentanoate + NADP(+) = (S)-2-ethyl-2-hydroxy-3-oxobutanoate + NADPH + H(+). Its pathway is amino-acid biosynthesis; L-isoleucine biosynthesis; L-isoleucine from 2-oxobutanoate: step 2/4. It participates in amino-acid biosynthesis; L-valine biosynthesis; L-valine from pyruvate: step 2/4. This Neurospora crassa (strain ATCC 24698 / 74-OR23-1A / CBS 708.71 / DSM 1257 / FGSC 987) protein is Ketol-acid reductoisomerase, mitochondrial (ilv-2).